Reading from the N-terminus, the 115-residue chain is NTF2-related export protein 1 (115 aa).

An NTF2 domain is found at 7-115 (YAQEFVQRYY…LVLRSSTNFL (109 aa)).

The protein resides in the nucleus. Functionally, stimulator of protein export for NES-containing proteins. Also plays a role in mRNA nuclear export. This chain is NTF2-related export protein 1 (nxt1), found in Schizosaccharomyces pombe (strain 972 / ATCC 24843) (Fission yeast).